The chain runs to 448 residues: Asparagine--tRNA ligase (448 aa).

Belongs to the class-II aminoacyl-tRNA synthetase family. In terms of assembly, homodimer.

The protein resides in the cytoplasm. The catalysed reaction is tRNA(Asn) + L-asparagine + ATP = L-asparaginyl-tRNA(Asn) + AMP + diphosphate + H(+). The sequence is that of Asparagine--tRNA ligase from Streptococcus pyogenes serotype M12 (strain MGAS9429).